A 161-amino-acid chain; its full sequence is Tropomyosin-2 (161 aa).

Residues 1–161 (MEKIKEKLNS…DEIANSLENL (161 aa)) adopt a coiled-coil conformation. Positions 32-43 (LEQSNTEKENEI) are enriched in basic and acidic residues. The tract at residues 32–97 (LEQSNTEKEN…NQDLEQQLED (66 aa)) is disordered. A Phosphoserine modification is found at S55. Over residues 62–83 (SQLSDTKQLAEDSNNLRSNNEN) the composition is skewed to polar residues. Residues S116 and S157 each carry the phosphoserine modification.

In terms of assembly, homodimer.

It is found in the cytoplasm. The protein resides in the cytoskeleton. Functionally, involved in cell morphogenesis. Binds to F-actin and stabilizes the actin filaments. This chain is Tropomyosin-2 (TPM2), found in Saccharomyces cerevisiae (strain ATCC 204508 / S288c) (Baker's yeast).